Here is a 337-residue protein sequence, read N- to C-terminus: 1-aminocyclopropane-1-carboxylate deaminase (337 aa).

The residue at position 50 (lysine 50) is an N6-(pyridoxal phosphate)lysine. Serine 77 serves as the catalytic Nucleophile.

Belongs to the ACC deaminase/D-cysteine desulfhydrase family. Homotrimer. Pyridoxal 5'-phosphate serves as cofactor.

The enzyme catalyses 1-aminocyclopropane-1-carboxylate + H2O = 2-oxobutanoate + NH4(+). Functionally, catalyzes a cyclopropane ring-opening reaction, the irreversible conversion of 1-aminocyclopropane-1-carboxylate (ACC) to ammonia and alpha-ketobutyrate. Allows growth on ACC as a nitrogen source. The sequence is that of 1-aminocyclopropane-1-carboxylate deaminase from Allorhizobium ampelinum (strain ATCC BAA-846 / DSM 112012 / S4) (Agrobacterium vitis (strain S4)).